Reading from the N-terminus, the 120-residue chain is Cytochrome c-550 (120 aa).

A helical membrane pass occupies residues 5 to 25 (PLIPFLLIAVLGIGLTFFLSV). The Periplasmic portion of the chain corresponds to 26-120 (KGLDDSREIA…DMAEWVSKIK (95 aa)). Heme c-binding residues include C60, C63, H64, and M99.

Post-translationally, binds 1 heme c group covalently per subunit.

It is found in the cell membrane. Functionally, not essential for growth on minimal or rich media. The sequence is that of Cytochrome c-550 (cccA) from Bacillus subtilis (strain 168).